Here is a 675-residue protein sequence, read N- to C-terminus: DNA gyrase subunit B (675 aa).

Positions Ser453–Pro567 constitute a Toprim domain. Mg(2+) is bound by residues Glu459, Asp532, and Asp534.

Belongs to the type II topoisomerase GyrB family. In terms of assembly, heterotetramer, composed of two GyrA and two GyrB chains. In the heterotetramer, GyrA contains the active site tyrosine that forms a transient covalent intermediate with DNA, while GyrB binds cofactors and catalyzes ATP hydrolysis. Requires Mg(2+) as cofactor. It depends on Mn(2+) as a cofactor. Ca(2+) serves as cofactor.

Its subcellular location is the cytoplasm. It catalyses the reaction ATP-dependent breakage, passage and rejoining of double-stranded DNA.. Its function is as follows. A type II topoisomerase that negatively supercoils closed circular double-stranded (ds) DNA in an ATP-dependent manner to modulate DNA topology and maintain chromosomes in an underwound state. Negative supercoiling favors strand separation, and DNA replication, transcription, recombination and repair, all of which involve strand separation. Also able to catalyze the interconversion of other topological isomers of dsDNA rings, including catenanes and knotted rings. Type II topoisomerases break and join 2 DNA strands simultaneously in an ATP-dependent manner. This Mycobacterium tuberculosis (strain ATCC 25177 / H37Ra) protein is DNA gyrase subunit B.